Here is a 315-residue protein sequence, read N- to C-terminus: Putative peptide transport system permease protein BMEII0209 (315 aa).

6 helical membrane passes run 13–33, 102–122, 136–156, 178–198, 238–258, and 287–307; these read AIPV…LLPG, LALL…VVAA, LALL…VILF, WLRS…GYLA, VSVL…SVVI, and MLFL…LYTI. An ABC transmembrane type-1 domain is found at 96–305; it reads LPVTISLALL…AINVLVDILY (210 aa).

This sequence belongs to the binding-protein-dependent transport system permease family. In terms of assembly, the complex is composed of two ATP-binding proteins (BMEII0205 and BMEII0206), two transmembrane proteins (BMEII0207/BMEII0208 and BMEII0209) and a solute-binding protein (BMEII0210).

It is found in the cell inner membrane. Functionally, probably part of an ABC transporter complex that could be involved in peptide import. Probably responsible for the translocation of the substrate across the membrane. This Brucella melitensis biotype 1 (strain ATCC 23456 / CCUG 17765 / NCTC 10094 / 16M) protein is Putative peptide transport system permease protein BMEII0209.